The primary structure comprises 344 residues: S-adenosylmethionine:tRNA ribosyltransferase-isomerase (344 aa).

Belongs to the QueA family. Monomer.

The protein resides in the cytoplasm. It catalyses the reaction 7-aminomethyl-7-carbaguanosine(34) in tRNA + S-adenosyl-L-methionine = epoxyqueuosine(34) in tRNA + adenine + L-methionine + 2 H(+). Its pathway is tRNA modification; tRNA-queuosine biosynthesis. Its function is as follows. Transfers and isomerizes the ribose moiety from AdoMet to the 7-aminomethyl group of 7-deazaguanine (preQ1-tRNA) to give epoxyqueuosine (oQ-tRNA). The polypeptide is S-adenosylmethionine:tRNA ribosyltransferase-isomerase (Acinetobacter baylyi (strain ATCC 33305 / BD413 / ADP1)).